Here is a 731-residue protein sequence, read N- to C-terminus: 1,4-alpha-glucan branching enzyme GlgB (731 aa).

Residue Asp412 is the Nucleophile of the active site. The active-site Proton donor is Glu465.

This sequence belongs to the glycosyl hydrolase 13 family. GlgB subfamily. Monomer.

The catalysed reaction is Transfers a segment of a (1-&gt;4)-alpha-D-glucan chain to a primary hydroxy group in a similar glucan chain.. It functions in the pathway glycan biosynthesis; glycogen biosynthesis. In terms of biological role, catalyzes the formation of the alpha-1,6-glucosidic linkages in glycogen by scission of a 1,4-alpha-linked oligosaccharide from growing alpha-1,4-glucan chains and the subsequent attachment of the oligosaccharide to the alpha-1,6 position. In Bordetella bronchiseptica (strain ATCC BAA-588 / NCTC 13252 / RB50) (Alcaligenes bronchisepticus), this protein is 1,4-alpha-glucan branching enzyme GlgB.